Reading from the N-terminus, the 214-residue chain is GTP-binding protein ypt3 (214 aa).

G17–S24 is a binding site for GTP. The Effector region signature appears at S39 to F47. T42 carries the post-translational modification Phosphothreonine. GTP is bound by residues D65–Q69 and N123–D126. 2 S-geranylgeranyl cysteine lipidation sites follow: C213 and C214.

This sequence belongs to the small GTPase superfamily. Rab family.

The protein localises to the cell membrane. It is found in the endosome membrane. It localises to the golgi apparatus membrane. The protein resides in the cytoplasm. Its subcellular location is the nucleus. In terms of biological role, has a role in retrograde traffricking of proteins from the endosome to the Golgi. Involved in the secretory pathway where it has a role in acid phosphatase secretion. The protein is GTP-binding protein ypt3 (ypt3) of Schizosaccharomyces pombe (strain 972 / ATCC 24843) (Fission yeast).